A 439-amino-acid chain; its full sequence is tRNA-2-methylthio-N(6)-dimethylallyladenosine synthase (439 aa).

An MTTase N-terminal domain is found at 2-115 (KGLYIKTYGC…LPELIVKASR (114 aa)). Positions 11, 47, 78, 155, 159, and 162 each coordinate [4Fe-4S] cluster. Positions 141-372 (NSQGSSAFLA…QKLISKQQLE (232 aa)) constitute a Radical SAM core domain. The TRAM domain occupies 375–439 (QSMVGKTIPV…QSSLLGCAFH (65 aa)).

The protein belongs to the methylthiotransferase family. MiaB subfamily. As to quaternary structure, monomer. [4Fe-4S] cluster serves as cofactor.

The protein resides in the cytoplasm. The enzyme catalyses N(6)-dimethylallyladenosine(37) in tRNA + (sulfur carrier)-SH + AH2 + 2 S-adenosyl-L-methionine = 2-methylsulfanyl-N(6)-dimethylallyladenosine(37) in tRNA + (sulfur carrier)-H + 5'-deoxyadenosine + L-methionine + A + S-adenosyl-L-homocysteine + 2 H(+). Catalyzes the methylthiolation of N6-(dimethylallyl)adenosine (i(6)A), leading to the formation of 2-methylthio-N6-(dimethylallyl)adenosine (ms(2)i(6)A) at position 37 in tRNAs that read codons beginning with uridine. In Wolbachia pipientis wMel, this protein is tRNA-2-methylthio-N(6)-dimethylallyladenosine synthase.